A 115-amino-acid polypeptide reads, in one-letter code: Probable non-functional T cell receptor beta variable 7-3 (115 aa).

A signal peptide spans 1–21; sequence MGTRLLCWAALCLLGADHTGA. Residues 22–115 enclose the Ig-like domain; sequence GVSQTPSNKV…SAAYLRASSL (94 aa).

In terms of assembly, most probably, the alpha-beta TR is not assembled due to incorrect folding of the beta chain. Alpha-beta TR is a heterodimer composed of an alpha and beta chain; disulfide-linked. The alpha-beta TR is associated with the transmembrane signaling CD3 coreceptor proteins to form the TR-CD3 (TcR or TCR). The assembly of alpha-beta TR heterodimers with CD3 occurs in the endoplasmic reticulum where a single alpha-beta TR heterodimer associates with one CD3D-CD3E heterodimer, one CD3G-CD3E heterodimer and one CD247 homodimer forming a stable octameric structure. CD3D-CD3E and CD3G-CD3E heterodimers preferentially associate with TR alpha and TR beta chains, respectively. The association of the CD247 homodimer is the last step of TcR assembly in the endoplasmic reticulum and is required for transport to the cell surface.

It localises to the cell membrane. Probable non-functional open reading frame (ORF) of V region of the variable domain of T cell receptor (TR) beta chain. Non-functional ORF generally cannot participate in the synthesis of a productive T cell receptor (TR) chain due to altered V-(D)-J or switch recombination and/or splicing site (at mRNA level) and/or conserved amino acid change (protein level). Alpha-beta T cell receptors are antigen specific receptors which are essential to the immune response and are present on the cell surface of T lymphocytes. Recognize peptide-major histocompatibility (MH) (pMH) complexes that are displayed by antigen presenting cells (APC), a prerequisite for efficient T cell adaptive immunity against pathogens. Binding of alpha-beta TR to pMH complex initiates TR-CD3 clustering on the cell surface and intracellular activation of LCK that phosphorylates the ITAM motifs of CD3G, CD3D, CD3E and CD247 enabling the recruitment of ZAP70. In turn ZAP70 phosphorylates LAT, which recruits numerous signaling molecules to form the LAT signalosome. The LAT signalosome propagates signal branching to three major signaling pathways, the calcium, the mitogen-activated protein kinase (MAPK) kinase and the nuclear factor NF-kappa-B (NF-kB) pathways, leading to the mobilization of transcription factors that are critical for gene expression and essential for T cell growth and differentiation. The T cell repertoire is generated in the thymus, by V-(D)-J rearrangement. This repertoire is then shaped by intrathymic selection events to generate a peripheral T cell pool of self-MH restricted, non-autoaggressive T cells. Post-thymic interaction of alpha-beta TR with the pMH complexes shapes TR structural and functional avidity. The sequence is that of Probable non-functional T cell receptor beta variable 7-3 from Homo sapiens (Human).